The sequence spans 545 residues: Glucose-6-phosphate isomerase 1 (545 aa).

Catalysis depends on E356, which acts as the Proton donor. Active-site residues include H387 and K508.

Belongs to the GPI family.

It localises to the cytoplasm. It catalyses the reaction alpha-D-glucose 6-phosphate = beta-D-fructose 6-phosphate. It functions in the pathway carbohydrate biosynthesis; gluconeogenesis. Its pathway is carbohydrate degradation; glycolysis; D-glyceraldehyde 3-phosphate and glycerone phosphate from D-glucose: step 2/4. In terms of biological role, catalyzes the reversible isomerization of glucose-6-phosphate to fructose-6-phosphate. The protein is Glucose-6-phosphate isomerase 1 of Cupriavidus pinatubonensis (strain JMP 134 / LMG 1197) (Cupriavidus necator (strain JMP 134)).